Here is a 20-residue protein sequence, read N- to C-terminus: Catechol 1,2-dioxygenase (20 aa).

The protein belongs to the intradiol ring-cleavage dioxygenase family. As to quaternary structure, homodimer which dissociates into active monomeric subunits at high ionic strengths. Requires Fe(3+) as cofactor.

It carries out the reaction catechol + O2 = cis,cis-muconate + 2 H(+). It participates in aromatic compound metabolism; beta-ketoadipate pathway; 5-oxo-4,5-dihydro-2-furylacetate from catechol: step 1/3. This is Catechol 1,2-dioxygenase from Acinetobacter radioresistens.